Reading from the N-terminus, the 279-residue chain is Very long chain fatty acid elongase 1 (279 aa).

The residue at position 1 (Met-1) is an N-acetylmethionine. Helical transmembrane passes span 23 to 43 (PLMG…YFIL), 61 to 81 (FMIV…YEFL), 110 to 130 (VAWL…IFIL), 137 to 154 (VTFL…SWWW), 176 to 196 (VVMY…PYLW), 203 to 223 (AIQL…YFMP), and 231 to 251 (IIIH…SNFW). A Di-lysine motif motif is present at residues 275–279 (KVKAN).

The protein belongs to the ELO family. ELOVL1 subfamily. Interacts with LASS2, TECR and HSD17B12. Interacts with TECR. As to expression, expressed in a broad variety of tissues. Highly expressed in stomach, lung, kidney, skin and intestine. Moderately expressed in white adipose tissue, liver, spleen, brain, brown adipose tissue, heart and muscle. Weakly expressed in testis.

It is found in the endoplasmic reticulum membrane. It catalyses the reaction a very-long-chain acyl-CoA + malonyl-CoA + H(+) = a very-long-chain 3-oxoacyl-CoA + CO2 + CoA. It carries out the reaction eicosanoyl-CoA + malonyl-CoA + H(+) = 3-oxodocosanoyl-CoA + CO2 + CoA. The catalysed reaction is docosanoyl-CoA + malonyl-CoA + H(+) = 3-oxotetracosanoyl-CoA + CO2 + CoA. The enzyme catalyses tetracosanoyl-CoA + malonyl-CoA + H(+) = 3-oxohexacosanoyl-CoA + CO2 + CoA. It catalyses the reaction (11Z)-eicosenoyl-CoA + malonyl-CoA + H(+) = 3-oxo-(13Z)-docosenoyl-CoA + CO2 + CoA. It carries out the reaction (13Z)-docosenoyl-CoA + malonyl-CoA + H(+) = 3-oxo-(15Z)-tetracosenoyl-CoA + CO2 + CoA. The protein operates within lipid metabolism; fatty acid biosynthesis. Its function is as follows. Catalyzes the first and rate-limiting reaction of the four reactions that constitute the long-chain fatty acids elongation cycle. This endoplasmic reticulum-bound enzymatic process allows the addition of 2 carbons to the chain of long- and very long-chain fatty acids (VLCFAs) per cycle. Condensing enzyme that exhibits activity toward saturated and monounsaturated acyl-CoA substrates, with the highest activity towards C22:0 acyl-CoA. May participate in the production of both saturated and monounsaturated VLCFAs of different chain lengths that are involved in multiple biological processes as precursors of membrane lipids and lipid mediators. Important for saturated C24:0 and monounsaturated C24:1 sphingolipid synthesis. Indirectly inhibits RPE65 via production of VLCFAs. This is Very long chain fatty acid elongase 1 from Mus musculus (Mouse).